The sequence spans 165 residues: MSLPDKAFPVSWDQFHRDARALAWRLAGLDKEFRAIVCITRGGLVPAAIISRELNIRMIDTVCIATRHDYVNQGDTVLLKGVAPELTTDAGEGVLVVDDLTDTGKTALEVREMLPRAHFACVYAKPKGVPTIDTFVTEVSQDTWIYFPWDMGFTYQEPIAKGSRG.

5-phospho-alpha-D-ribose 1-diphosphate contacts are provided by residues 41-42 and 98-106; these read RG and DDLTDTGKT. Residue aspartate 99 participates in Mg(2+) binding. Residues aspartate 102 and isoleucine 145 each coordinate guanine. Aspartate 102 and isoleucine 145 together coordinate xanthine. GMP-binding positions include 102–106 and 144–145; these read DTGKT and WI.

The protein belongs to the purine/pyrimidine phosphoribosyltransferase family. XGPT subfamily. Homotetramer. It depends on Mg(2+) as a cofactor.

It is found in the cell inner membrane. It catalyses the reaction GMP + diphosphate = guanine + 5-phospho-alpha-D-ribose 1-diphosphate. It carries out the reaction XMP + diphosphate = xanthine + 5-phospho-alpha-D-ribose 1-diphosphate. The catalysed reaction is IMP + diphosphate = hypoxanthine + 5-phospho-alpha-D-ribose 1-diphosphate. The protein operates within purine metabolism; GMP biosynthesis via salvage pathway; GMP from guanine: step 1/1. It participates in purine metabolism; XMP biosynthesis via salvage pathway; XMP from xanthine: step 1/1. Purine salvage pathway enzyme that catalyzes the transfer of the ribosyl-5-phosphate group from 5-phospho-alpha-D-ribose 1-diphosphate (PRPP) to the N9 position of the 6-oxopurines guanine and xanthine to form the corresponding ribonucleotides GMP (guanosine 5'-monophosphate) and XMP (xanthosine 5'-monophosphate), with the release of PPi. To a lesser extent, also acts on hypoxanthine. This Agrobacterium fabrum (strain C58 / ATCC 33970) (Agrobacterium tumefaciens (strain C58)) protein is Xanthine-guanine phosphoribosyltransferase.